The following is a 348-amino-acid chain: S-adenosylmethionine:tRNA ribosyltransferase-isomerase (348 aa).

The protein belongs to the QueA family. As to quaternary structure, monomer.

Its subcellular location is the cytoplasm. It carries out the reaction 7-aminomethyl-7-carbaguanosine(34) in tRNA + S-adenosyl-L-methionine = epoxyqueuosine(34) in tRNA + adenine + L-methionine + 2 H(+). Its pathway is tRNA modification; tRNA-queuosine biosynthesis. In terms of biological role, transfers and isomerizes the ribose moiety from AdoMet to the 7-aminomethyl group of 7-deazaguanine (preQ1-tRNA) to give epoxyqueuosine (oQ-tRNA). The polypeptide is S-adenosylmethionine:tRNA ribosyltransferase-isomerase (Cytophaga hutchinsonii (strain ATCC 33406 / DSM 1761 / CIP 103989 / NBRC 15051 / NCIMB 9469 / D465)).